Here is an 842-residue protein sequence, read N- to C-terminus: Protein P (842 aa).

The terminal protein domain (TP) stretch occupies residues M1–Q177. The segment at E178–L345 is spacer. A disordered region spans residues D186 to S273. Residues G223 to S239 are compositionally biased toward polar residues. The interval E346 to Q689 is polymerase/reverse transcriptase domain (RT). The region spanning K356–I599 is the Reverse transcriptase domain. Mg(2+) contacts are provided by D428, D550, and D551.

This sequence belongs to the hepadnaviridae P protein family.

It carries out the reaction DNA(n) + a 2'-deoxyribonucleoside 5'-triphosphate = DNA(n+1) + diphosphate. It catalyses the reaction Endonucleolytic cleavage to 5'-phosphomonoester.. With respect to regulation, activated by host HSP70 and HSP40 in vitro to be able to bind the epsilon loop of the pgRNA. Because deletion of the RNase H region renders the protein partly chaperone-independent, the chaperones may be needed indirectly to relieve occlusion of the RNA-binding site by this domain. Inhibited by several reverse-transcriptase inhibitors: Lamivudine, Adefovir and Entecavir. Its function is as follows. Multifunctional enzyme that converts the viral RNA genome into dsDNA in viral cytoplasmic capsids. This enzyme displays a DNA polymerase activity that can copy either DNA or RNA templates, and a ribonuclease H (RNase H) activity that cleaves the RNA strand of RNA-DNA heteroduplexes in a partially processive 3'- to 5'-endonucleasic mode. Neo-synthesized pregenomic RNA (pgRNA) are encapsidated together with the P protein, and reverse-transcribed inside the nucleocapsid. Initiation of reverse-transcription occurs first by binding the epsilon loop on the pgRNA genome, and is initiated by protein priming, thereby the 5'-end of (-)DNA is covalently linked to P protein. Partial (+)DNA is synthesized from the (-)DNA template and generates the relaxed circular DNA (RC-DNA) genome. After budding and infection, the RC-DNA migrates in the nucleus, and is converted into a plasmid-like covalently closed circular DNA (cccDNA). The activity of P protein does not seem to be necessary for cccDNA generation, and is presumably released from (+)DNA by host nuclear DNA repair machinery. The polypeptide is Protein P (Homo sapiens (Human)).